A 201-amino-acid chain; its full sequence is Recombination protein RecR (201 aa).

The C4-type zinc-finger motif lies at 57–72; the sequence is CCDCRTFTEEERCTIC. The Toprim domain occupies 81 to 176; that stretch reads GQICVVESPA…AASRIAHGVP (96 aa).

It belongs to the RecR family.

Functionally, may play a role in DNA repair. It seems to be involved in an RecBC-independent recombinational process of DNA repair. It may act with RecF and RecO. The chain is Recombination protein RecR from Proteus mirabilis (strain HI4320).